Here is a 441-residue protein sequence, read N- to C-terminus: Gamma-glutamyl phosphate reductase (441 aa).

The protein belongs to the gamma-glutamyl phosphate reductase family.

It is found in the cytoplasm. It catalyses the reaction L-glutamate 5-semialdehyde + phosphate + NADP(+) = L-glutamyl 5-phosphate + NADPH + H(+). It functions in the pathway amino-acid biosynthesis; L-proline biosynthesis; L-glutamate 5-semialdehyde from L-glutamate: step 2/2. Catalyzes the NADPH-dependent reduction of L-glutamate 5-phosphate into L-glutamate 5-semialdehyde and phosphate. The product spontaneously undergoes cyclization to form 1-pyrroline-5-carboxylate. This is Gamma-glutamyl phosphate reductase from Hydrogenobaculum sp. (strain Y04AAS1).